The primary structure comprises 504 residues: 2-methylcitrate dehydratase 2 (504 aa).

This sequence belongs to the PrpD family. In terms of assembly, monomer.

The enzyme catalyses (2S,3S)-2-methylcitrate = 2-methyl-cis-aconitate + H2O. It carries out the reaction citrate = D-threo-isocitrate. It functions in the pathway organic acid metabolism; propanoate degradation. It participates in carbohydrate metabolism; tricarboxylic acid cycle; isocitrate from oxaloacetate: step 1/2. Its function is as follows. Involved in the catabolism of short chain fatty acids (SCFA) via the 2-methylcitrate cycle I (propionate degradation route). Catalyzes the dehydration of 2-methylcitrate (2-MC) to yield the cis isomer 2-methyl-aconitate. Could also catalyze the dehydration of citrate and the hydration of cis-aconitate. This is 2-methylcitrate dehydratase 2 (prpD2) from Corynebacterium glutamicum (strain ATCC 13032 / DSM 20300 / JCM 1318 / BCRC 11384 / CCUG 27702 / LMG 3730 / NBRC 12168 / NCIMB 10025 / NRRL B-2784 / 534).